Reading from the N-terminus, the 525-residue chain is Cytochrome P450 750A1 (525 aa).

Residues 13 to 33 traverse the membrane as a helical segment; the sequence is PLPLPAILIATFIFFFSCWIL. C465 is a binding site for heme.

It belongs to the cytochrome P450 family. The cofactor is heme.

It is found in the membrane. The protein is Cytochrome P450 750A1 (CYP750A1) of Pinus taeda (Loblolly pine).